The primary structure comprises 277 residues: Hydroxyethylthiazole kinase (277 aa).

Met-56 serves as a coordination point for substrate. The ATP site is built by Arg-131 and Thr-177. A substrate-binding site is contributed by Ala-204.

This sequence belongs to the Thz kinase family. Mg(2+) serves as cofactor.

The catalysed reaction is 5-(2-hydroxyethyl)-4-methylthiazole + ATP = 4-methyl-5-(2-phosphooxyethyl)-thiazole + ADP + H(+). It participates in cofactor biosynthesis; thiamine diphosphate biosynthesis; 4-methyl-5-(2-phosphoethyl)-thiazole from 5-(2-hydroxyethyl)-4-methylthiazole: step 1/1. Its function is as follows. Catalyzes the phosphorylation of the hydroxyl group of 4-methyl-5-beta-hydroxyethylthiazole (THZ). This is Hydroxyethylthiazole kinase from Gemmatimonas aurantiaca (strain DSM 14586 / JCM 11422 / NBRC 100505 / T-27).